We begin with the raw amino-acid sequence, 370 residues long: Histidinol-phosphate aminotransferase 3 (370 aa).

Lys233 carries the N6-(pyridoxal phosphate)lysine modification.

It belongs to the class-II pyridoxal-phosphate-dependent aminotransferase family. Histidinol-phosphate aminotransferase subfamily. As to quaternary structure, homodimer. Pyridoxal 5'-phosphate serves as cofactor.

The enzyme catalyses L-histidinol phosphate + 2-oxoglutarate = 3-(imidazol-4-yl)-2-oxopropyl phosphate + L-glutamate. It functions in the pathway amino-acid biosynthesis; L-histidine biosynthesis; L-histidine from 5-phospho-alpha-D-ribose 1-diphosphate: step 7/9. In Burkholderia lata (strain ATCC 17760 / DSM 23089 / LMG 22485 / NCIMB 9086 / R18194 / 383), this protein is Histidinol-phosphate aminotransferase 3.